The primary structure comprises 273 residues: Non-homologous end joining protein Ku (273 aa).

The 178-residue stretch at 13-190 (KLSLVTCPVA…FTGIEKKSDA (178 aa)) folds into the Ku domain. The disordered stretch occupies residues 227 to 251 (KKKAKKPSKAKASKSTKGDDEEKSN). Positions 228 to 240 (KKAKKPSKAKASK) are enriched in basic residues.

The protein belongs to the prokaryotic Ku family. Homodimer. Interacts with LigD.

In terms of biological role, with LigD forms a non-homologous end joining (NHEJ) DNA repair enzyme, which repairs dsDNA breaks with reduced fidelity. Binds linear dsDNA with 5'- and 3'- overhangs but not closed circular dsDNA nor ssDNA. Recruits and stimulates the ligase activity of LigD. This Allorhizobium ampelinum (strain ATCC BAA-846 / DSM 112012 / S4) (Agrobacterium vitis (strain S4)) protein is Non-homologous end joining protein Ku.